A 333-amino-acid chain; its full sequence is (2R)-3-sulfolactate dehydrogenase (NADP(+)) (333 aa).

It belongs to the LDH2/MDH2 oxidoreductase family.

It catalyses the reaction (2R)-3-sulfolactate + NADP(+) = 3-sulfopyruvate + NADPH + H(+). Catalyzes the reduction of sulfopyruvate to (R)-sulfolactate. Together with SlcC, provides a racemase system that converts (2S)-3-sulfolactate to (2R)-3-sulfolactate, which is degraded further by (2R)-sulfolactate sulfo-lyase. The sequence is that of (2R)-3-sulfolactate dehydrogenase (NADP(+)) (comC) from Chromohalobacter salexigens (strain ATCC BAA-138 / DSM 3043 / CIP 106854 / NCIMB 13768 / 1H11).